Reading from the N-terminus, the 268-residue chain is Leucyl/phenylalanyl-tRNA--protein transferase (268 aa).

This sequence belongs to the L/F-transferase family.

The protein localises to the cytoplasm. It catalyses the reaction N-terminal L-lysyl-[protein] + L-leucyl-tRNA(Leu) = N-terminal L-leucyl-L-lysyl-[protein] + tRNA(Leu) + H(+). It carries out the reaction N-terminal L-arginyl-[protein] + L-leucyl-tRNA(Leu) = N-terminal L-leucyl-L-arginyl-[protein] + tRNA(Leu) + H(+). The catalysed reaction is L-phenylalanyl-tRNA(Phe) + an N-terminal L-alpha-aminoacyl-[protein] = an N-terminal L-phenylalanyl-L-alpha-aminoacyl-[protein] + tRNA(Phe). Functionally, functions in the N-end rule pathway of protein degradation where it conjugates Leu, Phe and, less efficiently, Met from aminoacyl-tRNAs to the N-termini of proteins containing an N-terminal arginine or lysine. This is Leucyl/phenylalanyl-tRNA--protein transferase from Psychrobacter arcticus (strain DSM 17307 / VKM B-2377 / 273-4).